We begin with the raw amino-acid sequence, 122 residues long: MGQSVSATRRVSRLRRHARLRKKIAGTPERPRLVVNRSARHIHVQLVNDENGTTVAAASSIEDDVRSLQGDKKARSVRVGQLIAERAKAAGIDSVVFDRGGYTYGGRIAALADAARENGLQF.

Belongs to the universal ribosomal protein uL18 family. Part of the 50S ribosomal subunit; part of the 5S rRNA/L5/L18/L25 subcomplex. Contacts the 5S and 23S rRNAs.

In terms of biological role, this is one of the proteins that bind and probably mediate the attachment of the 5S RNA into the large ribosomal subunit, where it forms part of the central protuberance. The sequence is that of Large ribosomal subunit protein uL18 from Mycobacterium avium (strain 104).